The chain runs to 351 residues: Phosphate acyltransferase (351 aa).

Belongs to the PlsX family. Homodimer. Probably interacts with PlsY.

It localises to the cytoplasm. It carries out the reaction a fatty acyl-[ACP] + phosphate = an acyl phosphate + holo-[ACP]. The protein operates within lipid metabolism; phospholipid metabolism. Catalyzes the reversible formation of acyl-phosphate (acyl-PO(4)) from acyl-[acyl-carrier-protein] (acyl-ACP). This enzyme utilizes acyl-ACP as fatty acyl donor, but not acyl-CoA. In Paramagnetospirillum magneticum (strain ATCC 700264 / AMB-1) (Magnetospirillum magneticum), this protein is Phosphate acyltransferase.